A 265-amino-acid chain; its full sequence is Hydroxyethylthiazole kinase 1 (265 aa).

A substrate-binding site is contributed by methionine 39. The ATP site is built by lysine 115 and threonine 168. Position 195 (glycine 195) interacts with substrate.

Belongs to the Thz kinase family. Requires Mg(2+) as cofactor.

It carries out the reaction 5-(2-hydroxyethyl)-4-methylthiazole + ATP = 4-methyl-5-(2-phosphooxyethyl)-thiazole + ADP + H(+). The protein operates within cofactor biosynthesis; thiamine diphosphate biosynthesis; 4-methyl-5-(2-phosphoethyl)-thiazole from 5-(2-hydroxyethyl)-4-methylthiazole: step 1/1. Its function is as follows. Catalyzes the phosphorylation of the hydroxyl group of 4-methyl-5-beta-hydroxyethylthiazole (THZ). The sequence is that of Hydroxyethylthiazole kinase 1 from Clostridium botulinum (strain Loch Maree / Type A3).